The sequence spans 668 residues: DNA ligase (668 aa).

NAD(+) is bound by residues Asp32–Asp36, Ser81–Leu82, and Glu111. Catalysis depends on Lys113, which acts as the N6-AMP-lysine intermediate. The NAD(+) site is built by Arg134, Glu171, Lys290, and Lys314. Cys408, Cys411, Cys426, and Cys432 together coordinate Zn(2+). Residues Glu591–Ser668 form the BRCT domain.

This sequence belongs to the NAD-dependent DNA ligase family. LigA subfamily. Requires Mg(2+) as cofactor. It depends on Mn(2+) as a cofactor.

The catalysed reaction is NAD(+) + (deoxyribonucleotide)n-3'-hydroxyl + 5'-phospho-(deoxyribonucleotide)m = (deoxyribonucleotide)n+m + AMP + beta-nicotinamide D-nucleotide.. Its function is as follows. DNA ligase that catalyzes the formation of phosphodiester linkages between 5'-phosphoryl and 3'-hydroxyl groups in double-stranded DNA using NAD as a coenzyme and as the energy source for the reaction. It is essential for DNA replication and repair of damaged DNA. The sequence is that of DNA ligase from Shewanella pealeana (strain ATCC 700345 / ANG-SQ1).